A 68-amino-acid polypeptide reads, in one-letter code: Kunitz-type serine protease inhibitor PPTI (68 aa).

Pyrrolidone carboxylic acid (Glu) is present on glutamate 1. Residues cysteine 7–cysteine 57 enclose the BPTI/Kunitz inhibitor domain. 3 disulfides stabilise this stretch: cysteine 7–cysteine 57, cysteine 16–cysteine 40, and cysteine 32–cysteine 53.

Expressed by the venom gland.

Its subcellular location is the secreted. Functionally, serine protease inhibitor that weakly inhibits trypsin (Ki=0.2 uM). May have potassium channel blocking activities. This Pseudocerastes persicus (Persian horned viper) protein is Kunitz-type serine protease inhibitor PPTI.